A 333-amino-acid polypeptide reads, in one-letter code: Methionyl-tRNA formyltransferase (333 aa).

(6S)-5,6,7,8-tetrahydrofolate is bound at residue 106 to 109 (SLLP).

This sequence belongs to the Fmt family.

The enzyme catalyses L-methionyl-tRNA(fMet) + (6R)-10-formyltetrahydrofolate = N-formyl-L-methionyl-tRNA(fMet) + (6S)-5,6,7,8-tetrahydrofolate + H(+). Functionally, attaches a formyl group to the free amino group of methionyl-tRNA(fMet). The formyl group appears to play a dual role in the initiator identity of N-formylmethionyl-tRNA by promoting its recognition by IF2 and preventing the misappropriation of this tRNA by the elongation apparatus. The sequence is that of Methionyl-tRNA formyltransferase from Elusimicrobium minutum (strain Pei191).